A 196-amino-acid polypeptide reads, in one-letter code: Glycerol-3-phosphate acyltransferase (196 aa).

4 helical membrane passes run N3–S23, V78–Y98, V112–F132, and W154–I174.

It belongs to the PlsY family. Probably interacts with PlsX.

Its subcellular location is the cell inner membrane. It catalyses the reaction an acyl phosphate + sn-glycerol 3-phosphate = a 1-acyl-sn-glycero-3-phosphate + phosphate. It participates in lipid metabolism; phospholipid metabolism. Its function is as follows. Catalyzes the transfer of an acyl group from acyl-phosphate (acyl-PO(4)) to glycerol-3-phosphate (G3P) to form lysophosphatidic acid (LPA). This enzyme utilizes acyl-phosphate as fatty acyl donor, but not acyl-CoA or acyl-ACP. The chain is Glycerol-3-phosphate acyltransferase from Methylobacillus flagellatus (strain ATCC 51484 / DSM 6875 / VKM B-1610 / KT).